Reading from the N-terminus, the 384-residue chain is Sensor-like histidine kinase SenX3 (384 aa).

The Histidine kinase domain maps to 153-369 (NVSHELKTPV…TFTLSIPEYP (217 aa)). Histidine 156 carries the phosphohistidine; by autocatalysis modification. Positions 360–384 (TFTLSIPEYPDPESHSDEREDQRER) are disordered. A compositionally biased stretch (basic and acidic residues) spans 371 to 384 (PESHSDEREDQRER).

Autophosphorylated.

The protein resides in the cell membrane. The catalysed reaction is ATP + protein L-histidine = ADP + protein N-phospho-L-histidine.. Functionally, member of the two-component regulatory system SenX3/RegX3 involved in stress response. The system is involved in phosphate starvation response. Probably exhibits a dual role as a phosphatase or a phosphodonor for the response regulator RegX3, depending upon phosphate availability. When environmental phosphate is abundant, SenX3 is required to maintain RegX3 in an unphosphorylated state, where it is unable to bind target DNA. Under conditions of phosphate limitation, SenX3 autophosphorylates and then transfers the phosphate group to RegX3. Probably does not itself sense phosphate concentrations, which may be relayed to SenX3 by the PstSCAB phosphate transporter system. This Mycolicibacterium smegmatis (strain ATCC 700084 / mc(2)155) (Mycobacterium smegmatis) protein is Sensor-like histidine kinase SenX3.